The following is a 498-amino-acid chain: Glycylpeptide N-tetradecanoyltransferase 2 (498 aa).

Positions Met-1–Met-88 are disordered. Residues Glu-15–Thr-32 show a composition bias toward acidic residues. Position 38 is a phosphoserine (Ser-38). Basic residues predominate over residues Ala-45–Glu-57. Polar residues predominate over residues Ser-61–Val-86. Residues His-117, Trp-122, Leu-250, Val-252, Ser-258, Arg-260, Val-261, and Ala-262 each contribute to the tetradecanoyl-CoA site.

This sequence belongs to the NMT family.

It localises to the cytoplasm. It is found in the membrane. It carries out the reaction N-terminal glycyl-[protein] + tetradecanoyl-CoA = N-tetradecanoylglycyl-[protein] + CoA + H(+). The catalysed reaction is N-terminal glycyl-L-lysyl-[protein] + tetradecanoyl-CoA = N-terminal glycyl-(N(6)-tetradecanoyl)-L-lysyl-[protein] + CoA + H(+). In terms of biological role, adds a myristoyl group to the N-terminal glycine residue of certain cellular and viral proteins. Also able to mediate N-terminal lysine myristoylation of proteins: catalyzes myristoylation of ARF6 on both 'Gly-2' and 'Lys-3'. Lysine myristoylation is required to maintain ARF6 on membranes during the GTPase cycle. The chain is Glycylpeptide N-tetradecanoyltransferase 2 from Homo sapiens (Human).